Consider the following 205-residue polypeptide: Regulator of G-protein signaling 4 (205 aa).

3 S-palmitoyl cysteine lipidation sites follow: C2, C12, and C95. The RGS domain maps to 62–178; sequence SLENLISHEC…LKSRFYLDLV (117 aa).

In terms of processing, palmitoylated on Cys-2 and/or Cys-12. Phosphorylated by cyclic GMP-dependent protein kinase.

Inhibits signal transduction by increasing the GTPase activity of G protein alpha subunits thereby driving them into their inactive GDP-bound form. Activity on G(z)-alpha is inhibited by phosphorylation of the G-protein. Activity on G(z)-alpha and G(i)-alpha-1 is inhibited by palmitoylation of the G-protein. This chain is Regulator of G-protein signaling 4 (RGS4), found in Bos taurus (Bovine).